The sequence spans 261 residues: Basic leucine zipper 19 (261 aa).

2 disordered regions span residues 1–22 and 74–100; these read MEDG…MGEL and ESDE…LGNR. Polar residues predominate over residues 8–18; the sequence is FSNQEVFSSSE. Residues 88–100 are compositionally biased toward basic and acidic residues; that stretch reads CGKKGEKRPLGNR. In terms of domain architecture, bZIP spans 89–155; the sequence is GKKGEKRPLG…SRLKCLLVDL (67 aa). The tract at residues 90–113 is basic motif; sequence KKGEKRPLGNREAVRKYREKKKAK. Positions 117–131 are leucine-zipper; it reads LEDEVARLRAVNQQL. Over residues 237 to 248 the composition is skewed to low complexity; the sequence is NGSFSNVNTSVS. The tract at residues 237–261 is disordered; that stretch reads NGSFSNVNTSVSNKRKGGHRASRAV. A compositionally biased stretch (basic residues) spans 249–261; the sequence is NKRKGGHRASRAV.

It is found in the nucleus. Functionally, transcription factor involved in the response to zinc ion deficiency. Binds to the consensus sequence 5'-[AG]TGTCGACA[CT]-3' also called zinc deficiency response element (ZDRE). The ZDRE sequence is conserved in the plant kingdom and present in the promoters of genes that constitute the primary response to zinc deficiency, comprising additional ZIP metal transporter genes. Required for zinc accumulation in roots. Mediates the expression of the zinc transporters ZIP3, ZIP4, ZIP5 and ZIP9 during growth in zinc-deficient conditions. ZIP9 transporter is involved in zinc uptake in roots. The protein is Basic leucine zipper 19 of Arabidopsis thaliana (Mouse-ear cress).